The primary structure comprises 271 residues: Acetyl-coenzyme A carboxylase carboxyl transferase subunit beta (271 aa).

Residues 21 to 271 enclose the CoA carboxyltransferase N-terminal domain; it reads LWIQCPYCKQ…LGDLLALHTA (251 aa). Zn(2+)-binding residues include Cys-25, Cys-28, Cys-43, and Cys-46. A C4-type zinc finger spans residues 25-46; it reads CPYCKQGSYRESLGNAQVCPHC.

It belongs to the AccD/PCCB family. In terms of assembly, acetyl-CoA carboxylase is a heterohexamer composed of biotin carboxyl carrier protein (AccB), biotin carboxylase (AccC) and two subunits each of ACCase subunit alpha (AccA) and ACCase subunit beta (AccD). It depends on Zn(2+) as a cofactor.

Its subcellular location is the cytoplasm. It catalyses the reaction N(6)-carboxybiotinyl-L-lysyl-[protein] + acetyl-CoA = N(6)-biotinyl-L-lysyl-[protein] + malonyl-CoA. It participates in lipid metabolism; malonyl-CoA biosynthesis; malonyl-CoA from acetyl-CoA: step 1/1. Its function is as follows. Component of the acetyl coenzyme A carboxylase (ACC) complex. Biotin carboxylase (BC) catalyzes the carboxylation of biotin on its carrier protein (BCCP) and then the CO(2) group is transferred by the transcarboxylase to acetyl-CoA to form malonyl-CoA. This is Acetyl-coenzyme A carboxylase carboxyl transferase subunit beta from Lacticaseibacillus paracasei (strain ATCC 334 / BCRC 17002 / CCUG 31169 / CIP 107868 / KCTC 3260 / NRRL B-441) (Lactobacillus paracasei).